Here is a 346-residue protein sequence, read N- to C-terminus: Tetraacyldisaccharide 4'-kinase (346 aa).

Position 54–61 (54–61) interacts with ATP; that stretch reads TVGGAGKT.

This sequence belongs to the LpxK family.

It catalyses the reaction a lipid A disaccharide + ATP = a lipid IVA + ADP + H(+). Its pathway is glycolipid biosynthesis; lipid IV(A) biosynthesis; lipid IV(A) from (3R)-3-hydroxytetradecanoyl-[acyl-carrier-protein] and UDP-N-acetyl-alpha-D-glucosamine: step 6/6. Functionally, transfers the gamma-phosphate of ATP to the 4'-position of a tetraacyldisaccharide 1-phosphate intermediate (termed DS-1-P) to form tetraacyldisaccharide 1,4'-bis-phosphate (lipid IVA). The chain is Tetraacyldisaccharide 4'-kinase from Sinorhizobium medicae (strain WSM419) (Ensifer medicae).